Consider the following 547-residue polypeptide: GMP synthase [glutamine-hydrolyzing] (547 aa).

A Glutamine amidotransferase type-1 domain is found at 12–210 (KVLILDFGSQ…VLEIAGAKPD (199 aa)). Residue Cys89 is the Nucleophile of the active site. Residues His184 and Glu186 contribute to the active site. The 193-residue stretch at 211-403 (WIMRDHIEEA…LGLPPEMVYR (193 aa)) folds into the GMPS ATP-PPase domain. 238–244 (SGGVDSS) is a binding site for ATP.

In terms of assembly, homodimer.

The catalysed reaction is XMP + L-glutamine + ATP + H2O = GMP + L-glutamate + AMP + diphosphate + 2 H(+). Its pathway is purine metabolism; GMP biosynthesis; GMP from XMP (L-Gln route): step 1/1. Functionally, catalyzes the synthesis of GMP from XMP. The chain is GMP synthase [glutamine-hydrolyzing] from Ralstonia nicotianae (strain ATCC BAA-1114 / GMI1000) (Ralstonia solanacearum).